We begin with the raw amino-acid sequence, 341 residues long: Ribulose-5-phosphate reductase (341 aa).

Zn(2+)-binding residues include Cys-38, His-64, Glu-65, and Glu-144.

The protein belongs to the zinc-containing alcohol dehydrogenase family. The cofactor is Zn(2+).

It catalyses the reaction D-ribitol 5-phosphate + NADP(+) = D-ribulose 5-phosphate + NADPH + H(+). It functions in the pathway cell wall biogenesis; poly(ribitol phosphate) teichoic acid biosynthesis. Its function is as follows. Catalyzes the NADPH dependent reduction of D-ribulose 5-phosphate to D-ribitol 5-phosphate. This Bacillus spizizenii (strain ATCC 23059 / NRRL B-14472 / W23) (Bacillus subtilis subsp. spizizenii) protein is Ribulose-5-phosphate reductase.